The sequence spans 179 residues: MYVIENPKVPSVYQIEENLKAGVEIEVNGAVLHGNDRDFAIELLSGTNIVLHVKFEFNGEHSIVLNSLINGEWGPQLRHSHFLKRHDPFHVRIYVHEGYYNITVNSDLLVEFDHRFPVVAVQGIGIKGSVDIESIVFKGYEFKTEWKKRHAIVNEAVCEAYDTVTNAPSVVQIEGTQHY.

Positions 11–138 (SVYQIEENLK…SVDIESIVFK (128 aa)) constitute a Galectin domain.

The sequence is that of Probable galaptin lec-7 (lec-7) from Caenorhabditis elegans.